The chain runs to 176 residues: Glutathione-regulated potassium-efflux system ancillary protein KefF (176 aa).

FMN contacts are provided by residues histidine 8, 14–17, 65–68, and 105–108; these read SHAN, MQWY, and TTGG.

Belongs to the NAD(P)H dehydrogenase (quinone) family. KefF subfamily. In terms of assembly, homodimer. Interacts with KefC. Requires FMN as cofactor.

The protein resides in the cell inner membrane. The enzyme catalyses a quinone + NADH + H(+) = a quinol + NAD(+). It carries out the reaction a quinone + NADPH + H(+) = a quinol + NADP(+). In terms of biological role, regulatory subunit of a potassium efflux system that confers protection against electrophiles. Required for full activity of KefC. Shows redox enzymatic activity, but this enzymatic activity is not required for activation of KefC. In Salmonella dublin (strain CT_02021853), this protein is Glutathione-regulated potassium-efflux system ancillary protein KefF.